Here is a 774-residue protein sequence, read N- to C-terminus: Acetyl-CoA decarbonylase/synthase complex subunit alpha (774 aa).

[4Fe-4S] cluster contacts are provided by cysteine 73, cysteine 76, cysteine 77, cysteine 79, cysteine 84, and cysteine 94. A CO-binding site is contributed by histidine 117. Residues histidine 251, cysteine 279, and cysteine 318 each contribute to the [Ni-4Fe-4S] cluster site. 4Fe-4S ferredoxin-type domains are found at residues 398-427 (LNEV…VKEA) and 436-466 (FKGF…VSMT). [4Fe-4S] cluster is bound by residues cysteine 408, cysteine 411, cysteine 414, cysteine 418, cysteine 446, cysteine 449, cysteine 452, and cysteine 456. The [Ni-4Fe-4S] cluster site is built by cysteine 514, cysteine 543, and cysteine 578.

It belongs to the Ni-containing carbon monoxide dehydrogenase family. Heterotetramer of two alpha and two epsilon subunits. The ACDS complex is made up of alpha, epsilon, beta, gamma and delta subunits with a probable stoichiometry of (alpha(2)epsilon(2))(4)-beta(8)-(gamma(1)delta(1))(8). Requires [4Fe-4S] cluster as cofactor. It depends on [Ni-4Fe-4S] cluster as a cofactor.

It carries out the reaction CO + 2 oxidized [2Fe-2S]-[ferredoxin] + H2O = 2 reduced [2Fe-2S]-[ferredoxin] + CO2 + 2 H(+). Functionally, part of the ACDS complex that catalyzes the reversible cleavage of acetyl-CoA, allowing autotrophic growth from CO(2). The alpha-epsilon subcomponent functions as a carbon monoxide dehydrogenase. The protein is Acetyl-CoA decarbonylase/synthase complex subunit alpha of Methanocaldococcus jannaschii (strain ATCC 43067 / DSM 2661 / JAL-1 / JCM 10045 / NBRC 100440) (Methanococcus jannaschii).